Consider the following 254-residue polypeptide: L-rhamnose 1-dehydrogenase (NAD(P)(+)) (254 aa).

Residues G13, S15, I18, D64, V65, and N91 each coordinate NADP(+). S144 functions as the Proton donor in the catalytic mechanism. S144, S146, Q154, and Y157 together coordinate beta-L-rhamnose. Residues Y157 and K161 each contribute to the NADP(+) site. Residue Y157 is the Proton acceptor of the active site. The active-site Lowers pKa of active site Tyr is the K161. Residue T189 participates in beta-L-rhamnose binding. Position 190 (I190) interacts with NADP(+). N195 contacts beta-L-rhamnose.

It belongs to the short-chain dehydrogenases/reductases (SDR) family.

It carries out the reaction L-rhamnofuranose + NAD(+) = L-rhamnono-1,4-lactone + NADH + H(+). The enzyme catalyses L-rhamnofuranose + NADP(+) = L-rhamnono-1,4-lactone + NADPH + H(+). It participates in carbohydrate degradation; L-rhamnose degradation. Functionally, NAD(P)-dependent dehydrogenase that catalyzes the oxidation of L-rhamnose to L-rhamnono-1,4-lactone. Also shows high activity with L-lyxose and low activity with L-mannose. Can utilize either NAD(+) or NADP(+), with a slight preference for NADP(+). Catalyzes the first step in an alternative pathway for rhamnose utilization that does not involve phosphorylated intermediates. This is L-rhamnose 1-dehydrogenase (NAD(P)(+)) from Sphingomonas sp. (strain SKA58).